The sequence spans 370 residues: Protein Mut11 (370 aa).

Residues 1-22 form a disordered region; that stretch reads MARGPGDTDMDEASADAAIPSS. 7 WD repeats span residues 38-77, 80-119, 122-162, 165-204, 208-247, 262-301, and 329-370; these read GHTK…RVNT, GHSC…CLRT, GHTN…CLRE, AHSD…CLKT, RDSP…TRRT, GFLG…VVGR, and GHTA…PAAA.

The protein belongs to the WD repeat WDR5/wds family.

The protein resides in the nucleus. In terms of biological role, part of a complex involved in 'Lys-4' histone H3 methylation. The sequence is that of Protein Mut11 (Mut11) from Chlamydomonas reinhardtii (Chlamydomonas smithii).